The sequence spans 285 residues: Polyamine aminopropyltransferase (285 aa).

The PABS domain occupies 5 to 238; that stretch reads EMWYETLHTG…GIMTFAWASD (234 aa). Gln-33 contributes to the S-methyl-5'-thioadenosine binding site. Residues His-64 and Asp-88 each coordinate spermidine. Residues Glu-108 and 140–141 each bind S-methyl-5'-thioadenosine; that span reads DG. The active-site Proton acceptor is the Asp-158. 158-161 serves as a coordination point for spermidine; sequence DCTD. Pro-165 is an S-methyl-5'-thioadenosine binding site.

The protein belongs to the spermidine/spermine synthase family. In terms of assembly, homodimer or homotetramer.

The protein resides in the cytoplasm. The enzyme catalyses S-adenosyl 3-(methylsulfanyl)propylamine + putrescine = S-methyl-5'-thioadenosine + spermidine + H(+). It functions in the pathway amine and polyamine biosynthesis; spermidine biosynthesis; spermidine from putrescine: step 1/1. Functionally, catalyzes the irreversible transfer of a propylamine group from the amino donor S-adenosylmethioninamine (decarboxy-AdoMet) to putrescine (1,4-diaminobutane) to yield spermidine. The polypeptide is Polyamine aminopropyltransferase (Erwinia tasmaniensis (strain DSM 17950 / CFBP 7177 / CIP 109463 / NCPPB 4357 / Et1/99)).